The following is a 407-amino-acid chain: Transcriptional regulator UL34 (407 aa).

The disordered stretch occupies residues 268–330 (AAGPPEADEN…ENEEEEEELF (63 aa)). Over residues 273-286 (EADENNDEGEEDDD) the composition is skewed to acidic residues. Positions 287-301 (ELRHSDPAPLHDSKK) are enriched in basic and acidic residues. Residues 302–312 (PRNARRPRTRV) are compositionally biased toward basic residues.

The protein belongs to the HHV-5 UL34 protein family.

Its subcellular location is the host nucleus. Its function is as follows. Acts as a transcriptional repressor of the US3 gene expression through a specific DNA sequence named the transcriptional repressive element (tre). The polypeptide is Transcriptional regulator UL34 (UL34) (Homo sapiens (Human)).